A 529-amino-acid chain; its full sequence is MVAAMTMCAAVAVLLVLTSTMAAAAGDGDGDGGGFDYKKALHSGLLYFEAQRSGHLPYNQRVRWRGHSGLADGLQQGVDLVGGYYDAGDNVKFGLPMAFTMTMLSWAAAEFWDEIAAAGERRHVLEAIKWGTDYLVKAHTAADELWAEVGDGDTDHYCWQRPEDMTTSRQAYKVDRDNPGSDVAGETAAALAAASIVFRRSKPRYSRLLLRHAEQLFDFGDRYRGKYDSSIGEVRAYYASVSGYGDELLWAALWLHRATGRRGYLDYAVAMADELGGVGWAVTEFSWDVKYAGLQILAAKVLMDGGDHPAAHAATLEQYRSKAEHYLCACLGKNAAAGDNVNRTAGGMLFVRRWNNMQYVTNAAFLLTVYSRYLRDSGGDTIRCSGGAMATGDELAAMARAQADYVLGDNPAGVSYMVGYGRRFPRRVHHRGASMVSHRADGRFVGCVQGYDRWFRRGGANPNVVAGAIVGGPDDRDRFRDSRDNYMQTEACTYNTAPMVGVFAHLHAQKMAARTANNNADRSMIKRVD.

Residues 1–24 form the signal peptide; the sequence is MVAAMTMCAAVAVLLVLTSTMAAA. Residue aspartate 89 is the Nucleophile of the active site. Asparagine 342 is a glycosylation site (N-linked (GlcNAc...) asparagine). Active-site residues include histidine 429, aspartate 481, and glutamate 490.

The protein belongs to the glycosyl hydrolase 9 (cellulase E) family. Expressed in roots and flowers.

The protein localises to the secreted. The catalysed reaction is Endohydrolysis of (1-&gt;4)-beta-D-glucosidic linkages in cellulose, lichenin and cereal beta-D-glucans.. This Oryza sativa subsp. japonica (Rice) protein is Endoglucanase 21 (GLU9).